Reading from the N-terminus, the 144-residue chain is Large ribosomal subunit protein uL15 (144 aa).

A disordered region spans residues 1-57 (MKLNDLSPAPGSRREKHRPGRGIGSGLGKTGGRGHKGQTSRSGGSIAPGFEGGQQPL). Over residues 21–31 (RGIGSGLGKTG) the composition is skewed to gly residues.

This sequence belongs to the universal ribosomal protein uL15 family. As to quaternary structure, part of the 50S ribosomal subunit.

Binds to the 23S rRNA. The protein is Large ribosomal subunit protein uL15 of Pseudomonas putida (strain ATCC 700007 / DSM 6899 / JCM 31910 / BCRC 17059 / LMG 24140 / F1).